The following is a 368-amino-acid chain: Probable endopolygalacturonase A (368 aa).

The N-terminal stretch at 1-18 is a signal peptide; sequence MRSVKLFGLAALGSLGAA. Positions 19-31 are excised as a propeptide; that stretch reads APAPSRVSDLTKR. A disulfide bridge links C35 with C50. PbH1 repeat units lie at residues 140-162, 167-192, 193-214, 215-235, 244-265, 273-295, and 307-352; these read LEDS…SVQA, LIDI…DISE, STGV…AINS, GENI…SIGS, VKNV…RIKT, VSQV…VIEQ, and TTGV…DITG. D207 acts as the Proton donor in catalysis. An intrachain disulfide couples C209 to C225. H229 is an active-site residue. N-linked (GlcNAc...) asparagine glycosylation occurs at N246. Intrachain disulfides connect C335–C340 and C359–C368.

Belongs to the glycosyl hydrolase 28 family.

Its subcellular location is the secreted. It catalyses the reaction (1,4-alpha-D-galacturonosyl)n+m + H2O = (1,4-alpha-D-galacturonosyl)n + (1,4-alpha-D-galacturonosyl)m.. Functionally, involved in maceration and soft-rotting of plant tissue. Hydrolyzes the 1,4-alpha glycosidic bonds of de-esterified pectate in the smooth region of the plant cell wall. In Aspergillus fumigatus (strain CBS 144.89 / FGSC A1163 / CEA10) (Neosartorya fumigata), this protein is Probable endopolygalacturonase A (pgaA).